We begin with the raw amino-acid sequence, 305 residues long: Protoheme IX farnesyltransferase (305 aa).

Helical transmembrane passes span 31-51, 52-72, 102-119, 123-145, 151-171, 179-199, 218-238, 240-260, and 281-301; these read VMSL…YSVH, PFIA…AGAI, ALSF…FMAL, LLAS…IWLK, NIVI…AAVS, IILF…LALF, ILYT…VSLM, FFIG…GLVF, and FAYS…TSTI.

This sequence belongs to the UbiA prenyltransferase family. Protoheme IX farnesyltransferase subfamily.

It is found in the cell inner membrane. The catalysed reaction is heme b + (2E,6E)-farnesyl diphosphate + H2O = Fe(II)-heme o + diphosphate. It participates in porphyrin-containing compound metabolism; heme O biosynthesis; heme O from protoheme: step 1/1. Converts heme B (protoheme IX) to heme O by substitution of the vinyl group on carbon 2 of heme B porphyrin ring with a hydroxyethyl farnesyl side group. In Rickettsia akari (strain Hartford), this protein is Protoheme IX farnesyltransferase.